A 325-amino-acid chain; its full sequence is tRNA U34 carboxymethyltransferase (325 aa).

Carboxy-S-adenosyl-L-methionine-binding positions include Lys-91, Trp-105, Lys-110, Gly-130, 152–154 (DPS), 181–182 (ME), Met-197, Tyr-201, and Arg-316.

The protein belongs to the class I-like SAM-binding methyltransferase superfamily. CmoB family. In terms of assembly, homotetramer.

The enzyme catalyses carboxy-S-adenosyl-L-methionine + 5-hydroxyuridine(34) in tRNA = 5-carboxymethoxyuridine(34) in tRNA + S-adenosyl-L-homocysteine + H(+). In terms of biological role, catalyzes carboxymethyl transfer from carboxy-S-adenosyl-L-methionine (Cx-SAM) to 5-hydroxyuridine (ho5U) to form 5-carboxymethoxyuridine (cmo5U) at position 34 in tRNAs. In Saccharophagus degradans (strain 2-40 / ATCC 43961 / DSM 17024), this protein is tRNA U34 carboxymethyltransferase.